A 556-amino-acid chain; its full sequence is 2-succinyl-5-enolpyruvyl-6-hydroxy-3-cyclohexene-1-carboxylate synthase (556 aa).

Belongs to the TPP enzyme family. MenD subfamily. In terms of assembly, homodimer. It depends on Mg(2+) as a cofactor. Requires Mn(2+) as cofactor. Thiamine diphosphate serves as cofactor.

It carries out the reaction isochorismate + 2-oxoglutarate + H(+) = 5-enolpyruvoyl-6-hydroxy-2-succinyl-cyclohex-3-ene-1-carboxylate + CO2. The protein operates within quinol/quinone metabolism; 1,4-dihydroxy-2-naphthoate biosynthesis; 1,4-dihydroxy-2-naphthoate from chorismate: step 2/7. It participates in quinol/quinone metabolism; menaquinone biosynthesis. Catalyzes the thiamine diphosphate-dependent decarboxylation of 2-oxoglutarate and the subsequent addition of the resulting succinic semialdehyde-thiamine pyrophosphate anion to isochorismate to yield 2-succinyl-5-enolpyruvyl-6-hydroxy-3-cyclohexene-1-carboxylate (SEPHCHC). This Salmonella heidelberg (strain SL476) protein is 2-succinyl-5-enolpyruvyl-6-hydroxy-3-cyclohexene-1-carboxylate synthase.